Consider the following 840-residue polypeptide: Translation initiation factor IF-2 (840 aa).

A compositionally biased stretch (basic and acidic residues) spans 95-143; that stretch reads RSPDEIEAERQRELEEQRAAEEAERLKAEEAAARQRAEEEARKAEEAAR. 2 disordered regions span residues 95-155 and 172-256; these read RSPD…ATAG and KPAA…PTGP. A compositionally biased stretch (low complexity) spans 144–155; that stretch reads AKAAQEAAATAG. Composition is skewed to basic and acidic residues over residues 175-191 and 223-232; these read AVEE…PKRD and STDEESDGYR. Residues 233-247 show a composition bias toward basic residues; the sequence is RGGRGGKSKLKKRNQ. Residues 340–509 enclose the tr-type G domain; sequence TRAPVVTVMG…LLQAEVLELK (170 aa). Residues 349–356 form a G1 region; it reads GHVDHGKT. Residue 349–356 coordinates GTP; that stretch reads GHVDHGKT. Residues 374–378 are G2; the sequence is GITQH. Positions 395-398 are G3; the sequence is DTPG. Residues 395 to 399 and 449 to 452 contribute to the GTP site; these read DTPGH and NKID. Positions 449 to 452 are G4; that stretch reads NKID. Residues 485–487 are G5; sequence SAK.

Belongs to the TRAFAC class translation factor GTPase superfamily. Classic translation factor GTPase family. IF-2 subfamily.

It localises to the cytoplasm. Functionally, one of the essential components for the initiation of protein synthesis. Protects formylmethionyl-tRNA from spontaneous hydrolysis and promotes its binding to the 30S ribosomal subunits. Also involved in the hydrolysis of GTP during the formation of the 70S ribosomal complex. This chain is Translation initiation factor IF-2, found in Pseudomonas aeruginosa (strain LESB58).